Here is a 46-residue protein sequence, read N- to C-terminus: Lantibiotic streptin (46 aa).

Positions 1–24 are excised as a propeptide; that stretch reads MNNTIKDFDLDLKTNKKDTATPYV.

The protein belongs to the type A lantibiotic family. In terms of processing, maturation of lantibiotics involves the enzymatic conversion of Thr, and Ser into dehydrated AA and the formation of thioether bonds with cysteine. This is followed by membrane translocation and cleavage of the modified precursor.

Lanthionine-containing peptide antibiotic (lantibiotic) active on certain Gram-positive bacteria. The bactericidal activity of lantibiotics is based on depolarization of energized bacterial cytoplasmic membranes, initiated by the formation of aqueous transmembrane pores. This Streptococcus pyogenes serotype M1 protein is Lantibiotic streptin (srtA).